The primary structure comprises 515 residues: Organic cation/carnitine transporter 5 (515 aa).

The Cytoplasmic portion of the chain corresponds to M1 to Q43. Residues I44–T64 form a helical membrane-spanning segment. Topologically, residues D65–T124 are extracellular. The helical transmembrane segment at F125–G145 threads the bilayer. At R146–L149 the chain is on the cytoplasmic side. The chain crosses the membrane as a helical span at residues L150–I172. Over Y173 to K177 the chain is Extracellular. A helical membrane pass occupies residues F178–I195. ATP is bound at residue I195 to K202. Topologically, residues S196–T208 are cytoplasmic. Residues M209–V229 traverse the membrane as a helical segment. Topologically, residues R230–K235 are extracellular. A helical transmembrane segment spans residues V236 to A256. At L257 to R320 the chain is on the cytoplasmic side. A helical transmembrane segment spans residues V321–A341. The Extracellular portion of the chain corresponds to V342–Y350. Residues M351–L371 form a helical membrane-spanning segment. At E372–S379 the chain is on the cytoplasmic side. A helical transmembrane segment spans residues V380–Y400. Topologically, residues G401 to L411 are extracellular. Residues G412–F432 form a helical membrane-spanning segment. The Cytoplasmic portion of the chain corresponds to P433–T441. Residues M442 to G462 traverse the membrane as a helical segment. The Extracellular segment spans residues R463–S467. The helical transmembrane segment at L468–P488 threads the bilayer. Residues E489–C515 lie on the Cytoplasmic side of the membrane.

Belongs to the major facilitator (TC 2.A.1) superfamily. Organic cation transporter (TC 2.A.1.19) family. Mostly expressed in leaves and siliques, and, to a lower extent, in roots, stems and flowers.

Its subcellular location is the vacuole membrane. High affinity carnitine transporter involved in the active cellular uptake of carnitine. Also transports organic cations. In Arabidopsis thaliana (Mouse-ear cress), this protein is Organic cation/carnitine transporter 5 (OCT5).